Consider the following 590-residue polypeptide: Suprabasin (590 aa).

Residues 1–25 form the signal peptide; sequence MHLARLVGSCSLLLLLGALSGWAAS. Disordered stretches follow at residues 182 to 213, 242 to 266, 297 to 338, and 545 to 570; these read GNEA…AHHG, FGQG…GVHH, GQGA…GVHH, and LNGN…SGAS. Composition is skewed to low complexity over residues 190–200, 243–254, 297–330, and 546–559; these read QGVHHAAGQAG, GQGAHHAAGQAG, GQGA…NEAG, and NGNH…HQGG. A compositionally biased stretch (polar residues) spans 560–570; it reads ATTTPLASGAS.

In terms of tissue distribution, detected in thymus, uterus and esophagus.

The protein resides in the secreted. This is Suprabasin (SBSN) from Homo sapiens (Human).